The sequence spans 261 residues: Cytochrome c oxidase subunit 3 (261 aa).

The Mitochondrial matrix portion of the chain corresponds to 1 to 15 (MTHQTHAYHMVNPSP). A helical membrane pass occupies residues 16–34 (WPLTGALSALLMTSGLIMW). Residues 35-40 (FHFNSM) are Mitochondrial intermembrane-facing. The chain crosses the membrane as a helical span at residues 41 to 66 (YLLMLGLTTNTLTMYQWWRDIVREST). At 67-72 (FQGHHT) the chain is on the mitochondrial matrix side. Residues 73–105 (PIVQKGLRYGMILFIVSEVFFFAGFFWAFYHSS) traverse the membrane as a helical segment. Topologically, residues 106 to 128 (LAPTPELGGCWPPTGITPLNPME) are mitochondrial intermembrane. A helical transmembrane segment spans residues 129 to 152 (VPLLNTSVLLASGVSITWAHHSLM). The Mitochondrial matrix segment spans residues 153 to 155 (EGN). A helical transmembrane segment spans residues 156–183 (RKHMLQALFITISLGVYFTLLQASEYYE). At 184–190 (TPFTISD) the chain is on the mitochondrial intermembrane side. Residues 191 to 223 (GIYGSTFFMATGFHGLHVIIGSTFLIVCFMRQL) form a helical membrane-spanning segment. At 224 to 232 (KFHFTSNHH) the chain is on the mitochondrial matrix side. Residues 233–256 (FGFEAAAWYWHFVDVVWLFLYVSI) form a helical membrane-spanning segment. The Mitochondrial intermembrane portion of the chain corresponds to 257–261 (YWWGS).

Belongs to the cytochrome c oxidase subunit 3 family. In terms of assembly, component of the cytochrome c oxidase (complex IV, CIV), a multisubunit enzyme composed of 14 subunits. The complex is composed of a catalytic core of 3 subunits MT-CO1, MT-CO2 and MT-CO3, encoded in the mitochondrial DNA, and 11 supernumerary subunits COX4I, COX5A, COX5B, COX6A, COX6B, COX6C, COX7A, COX7B, COX7C, COX8 and NDUFA4, which are encoded in the nuclear genome. The complex exists as a monomer or a dimer and forms supercomplexes (SCs) in the inner mitochondrial membrane with NADH-ubiquinone oxidoreductase (complex I, CI) and ubiquinol-cytochrome c oxidoreductase (cytochrome b-c1 complex, complex III, CIII), resulting in different assemblies (supercomplex SCI(1)III(2)IV(1) and megacomplex MCI(2)III(2)IV(2)).

The protein resides in the mitochondrion inner membrane. The enzyme catalyses 4 Fe(II)-[cytochrome c] + O2 + 8 H(+)(in) = 4 Fe(III)-[cytochrome c] + 2 H2O + 4 H(+)(out). Functionally, component of the cytochrome c oxidase, the last enzyme in the mitochondrial electron transport chain which drives oxidative phosphorylation. The respiratory chain contains 3 multisubunit complexes succinate dehydrogenase (complex II, CII), ubiquinol-cytochrome c oxidoreductase (cytochrome b-c1 complex, complex III, CIII) and cytochrome c oxidase (complex IV, CIV), that cooperate to transfer electrons derived from NADH and succinate to molecular oxygen, creating an electrochemical gradient over the inner membrane that drives transmembrane transport and the ATP synthase. Cytochrome c oxidase is the component of the respiratory chain that catalyzes the reduction of oxygen to water. Electrons originating from reduced cytochrome c in the intermembrane space (IMS) are transferred via the dinuclear copper A center (CU(A)) of subunit 2 and heme A of subunit 1 to the active site in subunit 1, a binuclear center (BNC) formed by heme A3 and copper B (CU(B)). The BNC reduces molecular oxygen to 2 water molecules using 4 electrons from cytochrome c in the IMS and 4 protons from the mitochondrial matrix. The sequence is that of Cytochrome c oxidase subunit 3 (MT-CO3) from Halichoerus grypus (Gray seal).